The primary structure comprises 56 residues: Large ribosomal subunit protein bL32 (56 aa).

The segment at 1–21 (MGVPQRRQSHARKNKRRSEWR) is disordered. Residues 7–19 (RQSHARKNKRRSE) are compositionally biased toward basic residues.

It belongs to the bacterial ribosomal protein bL32 family.

The sequence is that of Large ribosomal subunit protein bL32 from Syntrophomonas wolfei subsp. wolfei (strain DSM 2245B / Goettingen).